Reading from the N-terminus, the 224-residue chain is Probable octanoyltransferase (224 aa).

In terms of domain architecture, BPL/LPL catalytic spans 28 to 199 (GLTGDIALVT…KLALELGLTP (172 aa)). Substrate contacts are provided by residues 66-73 (RGGDATYH), 130-132 (SIG), and 143-145 (GVA). Cysteine 161 functions as the Acyl-thioester intermediate in the catalytic mechanism.

This sequence belongs to the LipB family.

It is found in the cytoplasm. The catalysed reaction is octanoyl-[ACP] + L-lysyl-[protein] = N(6)-octanoyl-L-lysyl-[protein] + holo-[ACP] + H(+). Its pathway is protein modification; protein lipoylation via endogenous pathway; protein N(6)-(lipoyl)lysine from octanoyl-[acyl-carrier-protein]: step 1/2. In terms of biological role, catalyzes the transfer of endogenously produced octanoic acid from octanoyl-acyl-carrier-protein onto the lipoyl domains of lipoate-dependent enzymes. Lipoyl-ACP can also act as a substrate although octanoyl-ACP is likely to be the physiological substrate. This Pyrobaculum aerophilum (strain ATCC 51768 / DSM 7523 / JCM 9630 / CIP 104966 / NBRC 100827 / IM2) protein is Probable octanoyltransferase.